Here is a 301-residue protein sequence, read N- to C-terminus: tRNA dimethylallyltransferase (301 aa).

Residue 12-19 coordinates ATP; that stretch reads GPTAVGKT. 14-19 is a substrate binding site; the sequence is TAVGKT. The segment at 37 to 40 is interaction with substrate tRNA; the sequence is DSQQ.

This sequence belongs to the IPP transferase family. In terms of assembly, monomer. The cofactor is Mg(2+).

It catalyses the reaction adenosine(37) in tRNA + dimethylallyl diphosphate = N(6)-dimethylallyladenosine(37) in tRNA + diphosphate. Functionally, catalyzes the transfer of a dimethylallyl group onto the adenine at position 37 in tRNAs that read codons beginning with uridine, leading to the formation of N6-(dimethylallyl)adenosine (i(6)A). This is tRNA dimethylallyltransferase from Streptococcus uberis (strain ATCC BAA-854 / 0140J).